Reading from the N-terminus, the 143-residue chain is Small ribosomal subunit protein uS12 (143 aa).

Over residues 1 to 19 (MGKPRGLRTARKHVNHRRD) the composition is skewed to basic residues. The interval 1–23 (MGKPRGLRTARKHVNHRRDQRWA) is disordered. Proline 62 is subject to 3-hydroxyproline.

Belongs to the universal ribosomal protein uS12 family. Component of the 40S small ribosomal subunit. Post-translationally, hydroxylation at Pro-62 affects translation termination efficiency.

The protein resides in the cytoplasm. Its subcellular location is the cytosol. It is found in the rough endoplasmic reticulum. The polypeptide is Small ribosomal subunit protein uS12 (RpS23) (Drosophila melanogaster (Fruit fly)).